The sequence spans 358 residues: uncharacterized protein (358 aa).

Residues 70–88 show a composition bias toward low complexity; that stretch reads RPAATAGTTPATGASGSAR. The interval 70–93 is disordered; it reads RPAATAGTTPATGASGSARPTDAA. One can recognise a Macro domain in the interval 178-353; it reads PSTCRGDNVS…AFSAAIQAGE (176 aa).

This is an uncharacterized protein from Mycobacterium bovis (strain ATCC BAA-935 / AF2122/97).